We begin with the raw amino-acid sequence, 120 residues long: uncharacterized protein (120 aa).

This is an uncharacterized protein from Escherichia coli O6:H1 (strain CFT073 / ATCC 700928 / UPEC).